The primary structure comprises 94 residues: Cystatin-A3 (94 aa).

The Secondary area of contact signature appears at 46–50; sequence QLVNG.

Belongs to the cystatin family.

It localises to the cytoplasm. Intracellular thiol proteinase inhibitor. The chain is Cystatin-A3 (cpiC) from Dictyostelium discoideum (Social amoeba).